The following is a 484-amino-acid chain: T-complex protein 1 subunit delta (484 aa).

It belongs to the TCP-1 chaperonin family. Component of the T-complex protein 1 (TCP1) complex.

The protein resides in the cytoplasm. Molecular chaperone; assists the folding of proteins upon ATP hydrolysis. This chain is T-complex protein 1 subunit delta (CCT4), found in Encephalitozoon cuniculi (strain GB-M1) (Microsporidian parasite).